The chain runs to 150 residues: SsrA-binding protein (150 aa).

It belongs to the SmpB family.

It is found in the cytoplasm. Required for rescue of stalled ribosomes mediated by trans-translation. Binds to transfer-messenger RNA (tmRNA), required for stable association of tmRNA with ribosomes. tmRNA and SmpB together mimic tRNA shape, replacing the anticodon stem-loop with SmpB. tmRNA is encoded by the ssrA gene; the 2 termini fold to resemble tRNA(Ala) and it encodes a 'tag peptide', a short internal open reading frame. During trans-translation Ala-aminoacylated tmRNA acts like a tRNA, entering the A-site of stalled ribosomes, displacing the stalled mRNA. The ribosome then switches to translate the ORF on the tmRNA; the nascent peptide is terminated with the 'tag peptide' encoded by the tmRNA and targeted for degradation. The ribosome is freed to recommence translation, which seems to be the essential function of trans-translation. The polypeptide is SsrA-binding protein (Rubrobacter xylanophilus (strain DSM 9941 / JCM 11954 / NBRC 16129 / PRD-1)).